The sequence spans 214 residues: Adenylate kinase (214 aa).

10–15 (GAGKGT) contributes to the ATP binding site. Residues 30–59 (STGDMFRDHKARGTELGKTVQAIMDAGGLV) form an NMP region. Residues Thr31, Arg36, 57-59 (GLV), 85-88 (GYPR), and Gln92 contribute to the AMP site. Positions 126-163 (GRRSCPKCGAVYHVSANPPRRMGYCDRDDAGLVQRDDD) are LID. Residue Arg127 participates in ATP binding. Zn(2+)-binding residues include Cys130 and Cys133. 136-137 (VY) is a binding site for ATP. Cys150 and Asp153 together coordinate Zn(2+). Positions 160 and 171 each coordinate AMP. Gly199 is a binding site for ATP.

It belongs to the adenylate kinase family. As to quaternary structure, monomer.

It localises to the cytoplasm. The enzyme catalyses AMP + ATP = 2 ADP. It functions in the pathway purine metabolism; AMP biosynthesis via salvage pathway; AMP from ADP: step 1/1. Catalyzes the reversible transfer of the terminal phosphate group between ATP and AMP. Plays an important role in cellular energy homeostasis and in adenine nucleotide metabolism. In Anaeromyxobacter sp. (strain Fw109-5), this protein is Adenylate kinase.